A 555-amino-acid polypeptide reads, in one-letter code: MFS-type transporter VdtG (555 aa).

Positions 1 to 20 are disordered; that stretch reads MNGNGTADKPGPPGGKPFGP. N-linked (GlcNAc...) asparagine glycosylation occurs at asparagine 4. A run of 3 helical transmembrane segments spans residues 30 to 50, 71 to 91, and 101 to 121; these read TGFKLYSIMTGLYLASFLTAL, DIGWYGSAYLLTFCAFQLLFG, and WVFLSAVLIFEIGSAICGAAP. N-linked (GlcNAc...) asparagine glycosylation is present at asparagine 122. 2 helical membrane-spanning segments follow: residues 132–152 and 162–182; these read IAGLGSSGIFGGSVIITFFTV and GIAGVIFALASSVGPLIGGGF. N-linked (GlcNAc...) asparagine glycosylation occurs at asparagine 185. 4 helical membrane-spanning segments follow: residues 190-210, 232-252, 262-282, and 304-324; these read WCFYINLPVGALTVVTILLFL, LGNLCLIPGIICLLLAIQWGG, IVALLVLAGVLLIAFVGVQLW, and AFTICVTAGFMSFNYYLPIWF. N-linked (GlcNAc...) asparagine glycosylation is present at asparagine 329. The next 5 membrane-spanning stretches (helical) occupy residues 337–357, 364–384, 393–413, 425–445, and 497–517; these read VMMLPTVISSGVASLACGFII, TPFMIGGSVLMAIGAGLLTTF, WIGYQVLWALGCGMSMQQASL, PIGISLIFFSQSLGGSVFLAV, and LMDVFRVAVASSCACVVAAAF. Residues 528–555 are disordered; it reads AAGPGGPGGPGGPGGPGGPEGLRGGNKV. The span at 530-555 shows a compositional bias: gly residues; sequence GPGGPGGPGGPGGPGGPEGLRGGNKV.

Belongs to the major facilitator superfamily. TCR/Tet family.

Its subcellular location is the endoplasmic reticulum membrane. MFS-type transporter; part of the gene cluster that mediates the biosynthesis of viriditoxin, one of the 'classical' secondary metabolites produced by fungi and that has antibacterial activity. Is not essential for viriditoxin production. The chain is MFS-type transporter VdtG from Byssochlamys spectabilis (Paecilomyces variotii).